The primary structure comprises 302 residues: G-protein coupled receptor A5 (302 aa).

At 1–20 (MADSSNSSLNCTAIHDQTVL) the chain is on the extracellular side. The helical transmembrane segment at 21-41 (ILGQVFNSVWLFISVIFLYIF) threads the bilayer. Residues 42–50 (ACKLCFRPR) lie on the Cytoplasmic side of the membrane. A helical transmembrane segment spans residues 51 to 71 (IYLWLSFYTLGFMLWVLCKVL). Over 72 to 81 (QEYVTGKFKC) the chain is Extracellular. The helical transmembrane segment at 82–102 (VITNCIGDFCLVFLSCIMLGI) threads the bilayer. Topologically, residues 103–122 (MLDRYLKIQGTLRGGMKDIH) are cytoplasmic. The helical transmembrane segment at 123 to 143 (IGIFVSASCFGSLMIALLDGL) threads the bilayer. Residues 144–173 (HMGDSEKLQFNGTESFKCLPATSVSSYKAQ) are Extracellular-facing. Residues 174 to 194 (LMFKSIFCIICIIMCLILTCL) traverse the membrane as a helical segment. The Cytoplasmic segment spans residues 195-208 (TAKKVLGTRLRKKY). The helical transmembrane segment at 209–229 (VIVGNVGLLSFVNILLWVMIA) threads the bilayer. The Extracellular segment spans residues 230–249 (CGLLKQALESNLSLCPTKQS). A helical transmembrane segment spans residues 250-270 (TYIYPYTMPVTVIFVLVIYLF). Residues 271–302 (SSTHMKNAMRKSGQIRHSLSSPNQVQSSFRLV) lie on the Cytoplasmic side of the membrane.

The protein belongs to the G-protein coupled receptor 1 family.

The protein localises to the host cell membrane. It is found in the host endoplasmic reticulum membrane. Acts as a viral G-protein coupled receptor that constitutively activates host alphai-type G-proteins, thereby inhibiting host forskolin-triggered CREB activation. This is G-protein coupled receptor A5 (A5) from Connochaetes taurinus (Blue wildebeest).